Consider the following 210-residue polypeptide: Probable nicotinate-nucleotide adenylyltransferase (210 aa).

This sequence belongs to the NadD family.

The enzyme catalyses nicotinate beta-D-ribonucleotide + ATP + H(+) = deamido-NAD(+) + diphosphate. It participates in cofactor biosynthesis; NAD(+) biosynthesis; deamido-NAD(+) from nicotinate D-ribonucleotide: step 1/1. Its function is as follows. Catalyzes the reversible adenylation of nicotinate mononucleotide (NaMN) to nicotinic acid adenine dinucleotide (NaAD). This Streptococcus mutans serotype c (strain ATCC 700610 / UA159) protein is Probable nicotinate-nucleotide adenylyltransferase.